The chain runs to 352 residues: NADH-ubiquinone oxidoreductase chain 2 (352 aa).

12 consecutive transmembrane segments (helical) span residues 4–24 (IVSTFLFVTVVSGTIIVVSSE), 26–46 (WFIIWVGLELSTLALVPILCS), 67–87 (AALLLNGALGQAWLTGSWSIL), 96–116 (ICLSIALAFKIGLAPVHFWFP), 124–144 (FFQGLIIATWQKIAPLILMFY), 148–168 (LGFSYLLITPSLISVLIGGWG), 177–197 (KILAFSSIGNMGWLVITSAYS), 198–218 (FNAAIIMLVIYLIINTSLFLL), 241–261 (VALVLLVMLSLGGLPPLTGFI), 264–284 (FTSLYFLVANNFIILSSIMII), 290–310 (YFFYLRISFNTSLFLFPQHII), and 332–352 (SVSTVLSTLAIPLTLPLYIIT).

The protein belongs to the complex I subunit 2 family.

The protein localises to the mitochondrion inner membrane. It carries out the reaction a ubiquinone + NADH + 5 H(+)(in) = a ubiquinol + NAD(+) + 4 H(+)(out). Functionally, core subunit of the mitochondrial membrane respiratory chain NADH dehydrogenase (Complex I) that is believed to belong to the minimal assembly required for catalysis. Complex I functions in the transfer of electrons from NADH to the respiratory chain. The immediate electron acceptor for the enzyme is believed to be ubiquinone. The chain is NADH-ubiquinone oxidoreductase chain 2 (ND2) from Strongylocentrotus purpuratus (Purple sea urchin).